Here is a 131-residue protein sequence, read N- to C-terminus: D-ribose pyranase (131 aa).

His-20 serves as the catalytic Proton donor. Substrate-binding positions include Asp-28, His-98, and Phe-120–Asn-122.

The protein belongs to the RbsD / FucU family. RbsD subfamily. Homodecamer.

The protein resides in the cytoplasm. The enzyme catalyses beta-D-ribopyranose = beta-D-ribofuranose. It participates in carbohydrate metabolism; D-ribose degradation; D-ribose 5-phosphate from beta-D-ribopyranose: step 1/2. Its function is as follows. Catalyzes the interconversion of beta-pyran and beta-furan forms of D-ribose. This is D-ribose pyranase from Levilactobacillus brevis (strain ATCC 367 / BCRC 12310 / CIP 105137 / JCM 1170 / LMG 11437 / NCIMB 947 / NCTC 947) (Lactobacillus brevis).